The primary structure comprises 238 residues: Orotidine 5'-phosphate decarboxylase (238 aa).

Substrate-binding positions include D10, K32, 59–68, T122, R184, Q193, G213, and R214; that span reads DLKLHDIPNT. K61 functions as the Proton donor in the catalytic mechanism.

Belongs to the OMP decarboxylase family. Type 1 subfamily. Homodimer.

The catalysed reaction is orotidine 5'-phosphate + H(+) = UMP + CO2. Its pathway is pyrimidine metabolism; UMP biosynthesis via de novo pathway; UMP from orotate: step 2/2. Its function is as follows. Catalyzes the decarboxylation of orotidine 5'-monophosphate (OMP) to uridine 5'-monophosphate (UMP). The chain is Orotidine 5'-phosphate decarboxylase from Bacillus cereus (strain AH820).